The sequence spans 69 residues: MARFRPSRSRSRSLYRRRRRSRRQRSRRGGRQTGPRKITRRGRGRGKSRRRRGRRSMRSSRRRRRRRRN.

Basic residues-rich tracts occupy residues 1–30 (MARF…RRGG) and 37–69 (KITR…RRRN). A disordered region spans residues 1–69 (MARFRPSRSR…SRRRRRRRRN (69 aa)).

This sequence belongs to the protamine P1 family. In terms of tissue distribution, testis.

The protein localises to the nucleus. Its subcellular location is the chromosome. In terms of biological role, protamines substitute for histones in the chromatin of sperm during the haploid phase of spermatogenesis. They compact sperm DNA into a highly condensed, stable and inactive complex. This Tachyglossus aculeatus aculeatus (Southeast Australian short-beaked echidna) protein is Sperm protamine P1 (PRM1).